The sequence spans 166 residues: Large ribosomal subunit protein uL10 (166 aa).

This sequence belongs to the universal ribosomal protein uL10 family. Part of the ribosomal stalk of the 50S ribosomal subunit. The N-terminus interacts with L11 and the large rRNA to form the base of the stalk. The C-terminus forms an elongated spine to which L12 dimers bind in a sequential fashion forming a multimeric L10(L12)X complex.

Functionally, forms part of the ribosomal stalk, playing a central role in the interaction of the ribosome with GTP-bound translation factors. The protein is Large ribosomal subunit protein uL10 of Shewanella sediminis (strain HAW-EB3).